The following is a 230-amino-acid chain: Sugar fermentation stimulation protein homolog (230 aa).

The protein belongs to the SfsA family.

In Clostridium botulinum (strain ATCC 19397 / Type A), this protein is Sugar fermentation stimulation protein homolog.